Consider the following 168-residue polypeptide: uncharacterized protein (168 aa).

CBS domains are found at residues 20–77 (IMKK…NEDL) and 117–168 (MTRK…EALI).

This is an uncharacterized protein from Methanocaldococcus jannaschii (strain ATCC 43067 / DSM 2661 / JAL-1 / JCM 10045 / NBRC 100440) (Methanococcus jannaschii).